We begin with the raw amino-acid sequence, 132 residues long: Replication enhancer protein (132 aa).

It belongs to the geminiviridae replication enhancer protein family. As to quaternary structure, homooligomer. Interacts with the replication-associated protein (REP). Interacts with host proliferating cell nuclear antigen (PCNA). Interacts with host retinoblastoma-related protein 1 (RBR1), and may thereby deregulate the host cell cycle. Oligomerization and interaction with PCNA are necessary for optimal replication enhancement.

Increases viral DNA accumulation. Enhances infectivity and symptom expression. This chain is Replication enhancer protein, found in Abutilon (Upland cotton).